The sequence spans 461 residues: Peroxisomal biogenesis factor 2 (461 aa).

The Peroxisomal matrix segment spans residues 1–13; it reads MPNRLIPLANPAN. A helical membrane pass occupies residues 14 to 40; the sequence is RVLQLDAKLLDNEISDMLYRQLSGAFN. The Cytoplasmic portion of the chain corresponds to 41-51; it reads SNRLPSWLGRI. A helical transmembrane segment spans residues 52-77; it reads HSNYASELKLLLELLIFKVTVWNKHS. Residues 78-101 lie on the Peroxisomal matrix side of the membrane; the sequence is SYGLTLQNLVMYDGGVHNKKFRSK. The chain crosses the membrane as a helical span at residues 102–139; it reads QQSELRVTKKILLLSSVLLGYFVKKIQSYVYSFEDYDL. The Cytoplasmic segment spans residues 140 to 151; it reads ETDGEDLSTLER. A helical membrane pass occupies residues 152–185; it reads IRLKTIKLLKSQISTLEKAHSVLSLVNFVTFLVS. Residues 186 to 218 lie on the Peroxisomal matrix side of the membrane; sequence GSFPDLTTRILNIRFKPLVTTQVAFASNPETIS. Residues 219 to 242 traverse the membrane as a helical segment; that stretch reads YEFQNRQLVWNTLTEFIVFILPAL. Residues 243–461 lie on the Cytoplasmic side of the membrane; sequence SVPKFTKSLV…DSPGFFVGAL (219 aa). The Zn(2+) site is built by cysteine 281, cysteine 284, cysteine 314, histidine 316, cysteine 319, cysteine 322, cysteine 348, and cysteine 351. An RING-type zinc finger spans residues 281–352; the sequence is CAICFQNSQN…NKYWHCLRCN (72 aa). Disordered regions lie at residues 374–408 and 440–461; these read VEEV…FHHV and AEDE…VGAL. Positions 376 to 387 are enriched in acidic residues; it reads EVTEDEDASSED. The span at 388–397 shows a compositional bias: basic and acidic residues; that stretch reads EEKRDQDSEG. Over residues 440–453 the composition is skewed to acidic residues; sequence AEDEYTDEEVDDDS.

It belongs to the pex2/pex10/pex12 family. In terms of assembly, component of the peroxisomal translocation complex, composed of at least PEX3, PEX2, PEX10 and PEX12.

It is found in the peroxisome membrane. The enzyme catalyses [E2 ubiquitin-conjugating enzyme]-S-ubiquitinyl-L-cysteine + [acceptor protein]-L-cysteine = [E2 ubiquitin-conjugating enzyme]-L-cysteine + [acceptor protein]-S-ubiquitinyl-L-cysteine.. It participates in protein modification; protein ubiquitination. E3 ubiquitin-protein ligase component of the peroxisomal translocation complex. The two types of peroxisomal matrix targeting signals, PTS1 and PTS2, are first recognized in the cytosol by their receptors PEX5 and PEX7, respectively, which then carry the cargo to the peroxisomal membrane. The peroxisomal targeting signal (PTS) receptor-cargo complexes interact with peroxisomal membrane protein (PMP) components of the docking complex. They have then additional downstream interactions with the translocation complex, leading to the transport of fully folded and oligomerized cargo into the peroxisome matrix. The peroxisomal translocation complex forms the retrotranslocation channel with each subunit contributing transmembrane segments that coassemble into an open channel that specifically allows the passage of PEX5 and PEX20 through the peroxisomal membrane. Specifically catalyzes monoubiquitination of PEX5 and/or PEX20 at 'Cys-6' and 'Cys-8', respectively, a modification that acts as a signal for PEX5 or PEX20 export from peroxisomes to the cytosol, thereby promoting PEX5 and PEX20 recycling. The protein is Peroxisomal biogenesis factor 2 (PEX2) of Komagataella phaffii (strain GS115 / ATCC 20864) (Yeast).